Reading from the N-terminus, the 425-residue chain is Alpha-muurolene synthase (425 aa).

Mg(2+) is bound by residues Asp-97, Asp-101, Asn-240, Ser-244, and Glu-248. The short motif at Asp-97–Asp-101 is the DDXXD motif element. The segment at Val-348–Val-382 is disordered. The segment covering Ala-349 to Gln-362 has biased composition (pro residues). The segment covering Ala-366–Asp-377 has biased composition (basic and acidic residues).

It belongs to the terpene synthase family. The cofactor is Mg(2+).

It catalyses the reaction (2E,6E)-farnesyl diphosphate = alpha-muurolene + diphosphate. It carries out the reaction (2E,6E)-farnesyl diphosphate = gamma-muurolene + diphosphate. The catalysed reaction is (2E,6E)-farnesyl diphosphate = (+)-(R)-germacrene A + diphosphate. Sesquiterpene synthase that catalyzes the formation of alpha-muurolene, and at lower level (+)-(R)-germacrene A and gamma-muurolene. This Coprinopsis cinerea (strain Okayama-7 / 130 / ATCC MYA-4618 / FGSC 9003) (Inky cap fungus) protein is Alpha-muurolene synthase (COP3).